The primary structure comprises 451 residues: Clusterin (451 aa).

Residues Met-1–Gly-18 form the signal peptide. Disulfide bonds link Cys-98–Cys-314, Cys-109–Cys-306, Cys-112–Cys-303, Cys-117–Cys-296, and Cys-125–Cys-286. Residues Asn-99, Asn-141, Asn-278, Asn-355, Asn-375, and Asn-447 are each glycosylated (N-linked (GlcNAc...) asparagine).

Belongs to the clusterin family. In terms of assembly, antiparallel disulfide-linked heterodimer of an alpha chain and a beta chain. Self-associates and forms higher oligomers. Interacts with a broad range of misfolded proteins. In terms of processing, proteolytically cleaved on its way through the secretory system, probably within the Golgi lumen. Post-translationally, polyubiquitinated, leading to proteasomal degradation.

It is found in the secreted. The protein localises to the cytoplasmic vesicle. The protein resides in the secretory vesicle. It localises to the chromaffin granule. Its subcellular location is the nucleus. It is found in the cytoplasm. The protein localises to the mitochondrion membrane. The protein resides in the cytosol. It localises to the endoplasmic reticulum. Functionally, functions as extracellular chaperone that prevents aggregation of nonnative proteins. Prevents stress-induced aggregation of blood plasma proteins. Does not require ATP. Maintains partially unfolded proteins in a state appropriate for subsequent refolding by other chaperones, such as HSPA8/HSC70. Does not refold proteins by itself. Binding to cell surface receptors triggers internalization of the chaperone-client complex and subsequent lysosomal or proteasomal degradation. When secreted, protects cells against apoptosis and against cytolysis by complement: inhibits assembly of the complement membrane attack complex (MAC) by preventing polymerization of C9 pore component of the MAC complex. Intracellular forms interact with ubiquitin and SCF (SKP1-CUL1-F-box protein) E3 ubiquitin-protein ligase complexes and promote the ubiquitination and subsequent proteasomal degradation of target proteins. Modulates NF-kappa-B transcriptional activity. Promotes apoptosis when in the nucleus. Inhibits apoptosis when associated with the mitochondrial membrane by interference with BAX-dependent release of cytochrome c into the cytoplasm. Plays a role in the regulation of cell proliferation. In Coturnix japonica (Japanese quail), this protein is Clusterin (CLU).